We begin with the raw amino-acid sequence, 62 residues long: Potassium channel toxin alpha-KTx 18.3 (62 aa).

The first 26 residues, 1-26 (MHFSGVAFILISMVLIGSIFETTVEA), serve as a signal peptide directing secretion. 3 cysteine pairs are disulfide-bonded: cysteine 34–cysteine 53, cysteine 39–cysteine 58, and cysteine 43–cysteine 60.

Belongs to the short scorpion toxin superfamily. Potassium channel inhibitor family. Alpha-KTx 18 subfamily. Expressed by the venom gland.

It is found in the secreted. Functionally, probable voltage-gated potassium channel inhibitor. This is Potassium channel toxin alpha-KTx 18.3 from Tityus discrepans (Venezuelan scorpion).